Reading from the N-terminus, the 351-residue chain is Heat-inducible transcription repressor HrcA (351 aa).

It belongs to the HrcA family.

Functionally, negative regulator of class I heat shock genes (grpE-dnaK-dnaJ and groELS operons). Prevents heat-shock induction of these operons. In Beutenbergia cavernae (strain ATCC BAA-8 / DSM 12333 / CCUG 43141 / JCM 11478 / NBRC 16432 / NCIMB 13614 / HKI 0122), this protein is Heat-inducible transcription repressor HrcA.